A 435-amino-acid polypeptide reads, in one-letter code: Serine carboxypeptidase-like 12 (435 aa).

The first 21 residues, 1–21 (MKSTPKLLLLLLFIINHHVDS), serve as a signal peptide directing secretion. Intrachain disulfides connect Cys-80–Cys-323, Cys-244–Cys-258, and Cys-282–Cys-289. A glycan (N-linked (GlcNAc...) asparagine) is linked at Asn-101. Residue Ser-176 is part of the active site. Asn-313, Asn-336, and Asn-344 each carry an N-linked (GlcNAc...) asparagine glycan. The active site involves Asp-360. Asn-376 carries an N-linked (GlcNAc...) asparagine glycan. His-413 is a catalytic residue. N-linked (GlcNAc...) asparagine glycosylation is present at Asn-420.

The protein belongs to the peptidase S10 family. In terms of tissue distribution, expressed in roots.

The protein localises to the secreted. Probable carboxypeptidase. The protein is Serine carboxypeptidase-like 12 (SCPL12) of Arabidopsis thaliana (Mouse-ear cress).